A 553-amino-acid polypeptide reads, in one-letter code: Putative transport protein YidE (553 aa).

Helical transmembrane passes span 4-24, 28-48, 65-85, 95-115, and 158-178; these read IALT…IGNV, GIGL…HFVS, FGLI…FFAS, LFAV…HKLF, and MSYA…MWML. 2 consecutive RCK C-terminal domains span residues 191–276 and 279–361; these read QQHE…VIGQ and DTSL…VLGN. 5 helical membrane passes run 371–391, 394–414, 439–459, 464–484, and 533–553; these read MLPV…PVFV, FPAA…LILG, IVLF…NTLV, LSWI…VGIL, and LVMF…WSIG.

This sequence belongs to the AAE transporter (TC 2.A.81) family. YidE subfamily.

The protein resides in the cell membrane. The chain is Putative transport protein YidE from Shigella dysenteriae serotype 1 (strain Sd197).